A 166-amino-acid polypeptide reads, in one-letter code: Large ribosomal subunit protein uL10 (166 aa).

The protein belongs to the universal ribosomal protein uL10 family. As to quaternary structure, part of the ribosomal stalk of the 50S ribosomal subunit. The N-terminus interacts with L11 and the large rRNA to form the base of the stalk. The C-terminus forms an elongated spine to which L12 dimers bind in a sequential fashion forming a multimeric L10(L12)X complex.

Functionally, forms part of the ribosomal stalk, playing a central role in the interaction of the ribosome with GTP-bound translation factors. This is Large ribosomal subunit protein uL10 from Ectopseudomonas mendocina (strain ymp) (Pseudomonas mendocina).